A 204-amino-acid chain; its full sequence is LexA repressor (204 aa).

The segment at residues 28–48 (RAEIAQELGFKSPNAAEEHLK) is a DNA-binding region (H-T-H motif). Residues S125 and K162 each act as for autocatalytic cleavage activity in the active site.

The protein belongs to the peptidase S24 family. In terms of assembly, homodimer.

It catalyses the reaction Hydrolysis of Ala-|-Gly bond in repressor LexA.. Its function is as follows. Represses a number of genes involved in the response to DNA damage (SOS response), including recA and lexA. In the presence of single-stranded DNA, RecA interacts with LexA causing an autocatalytic cleavage which disrupts the DNA-binding part of LexA, leading to derepression of the SOS regulon and eventually DNA repair. The protein is LexA repressor of Pseudomonas aeruginosa (strain LESB58).